The chain runs to 746 residues: Polyribonucleotide nucleotidyltransferase (746 aa).

Mg(2+) is bound by residues D493 and D499. A KH domain is found at 560 to 619 (PRIITLQINPEKIGALIGPGGKTIRSITEATGAQIDIEEDGRVYISTADAAAAQQAVAMV). The S1 motif domain occupies 629–698 (GDIFLGKVVR…GTGKVSLSRR (70 aa)). Residues 704–746 (ETAEDRRAAGAGRGLRDGGRSSGSERSGDRSPRSDDRPRPRRR) are disordered. 2 stretches are compositionally biased toward basic and acidic residues: residues 706-722 (AEDR…RDGG) and 729-746 (RSGD…PRRR).

It belongs to the polyribonucleotide nucleotidyltransferase family. The cofactor is Mg(2+).

The protein resides in the cytoplasm. It catalyses the reaction RNA(n+1) + phosphate = RNA(n) + a ribonucleoside 5'-diphosphate. In terms of biological role, involved in mRNA degradation. Catalyzes the phosphorolysis of single-stranded polyribonucleotides processively in the 3'- to 5'-direction. The sequence is that of Polyribonucleotide nucleotidyltransferase from Roseiflexus castenholzii (strain DSM 13941 / HLO8).